The following is a 330-amino-acid chain: Delta-aminolevulinic acid dehydratase (330 aa).

4 residues coordinate Zn(2+): cysteine 122, cysteine 124, histidine 131, and cysteine 132. Catalysis depends on lysine 199, which acts as the Schiff-base intermediate with substrate. Lysine 199 carries the N6-succinyllysine modification. Arginine 209 lines the 5-aminolevulinate pocket. Serine 215 carries the phosphoserine modification. Arginine 221 is a binding site for 5-aminolevulinate. Cysteine 223 is a Zn(2+) binding site. Lysine 252 acts as the Schiff-base intermediate with substrate in catalysis. Position 252 is an N6-succinyllysine (lysine 252). 5-aminolevulinate is bound by residues serine 279 and tyrosine 318.

This sequence belongs to the ALAD family. Homooctamer; active form. Homohexamer; low activity form. Zn(2+) is required as a cofactor.

It localises to the cytoplasm. The protein localises to the cytosol. The catalysed reaction is 2 5-aminolevulinate = porphobilinogen + 2 H2O + H(+). It participates in porphyrin-containing compound metabolism; protoporphyrin-IX biosynthesis; coproporphyrinogen-III from 5-aminolevulinate: step 1/4. Can alternate between a fully active homooctamer and a low-activity homohexamer. A bound magnesium ion may promote the assembly of the fully active homooctamer. The magnesium-binding site is absent in the low-activity homohexamer. Inhibited by compounds that favor the hexameric state. Inhibited by divalent lead ions. The lead ions partially displace the zinc cofactor. Its function is as follows. Catalyzes an early step in the biosynthesis of tetrapyrroles. Binds two molecules of 5-aminolevulinate per subunit, each at a distinct site, and catalyzes their condensation to form porphobilinogen. The sequence is that of Delta-aminolevulinic acid dehydratase (Alad) from Mus musculus (Mouse).